Consider the following 819-residue polypeptide: Leucine--tRNA ligase (819 aa).

The short motif at 42–52 (PYPSGRLHMGH) is the 'HIGH' region element. Residues 577–581 (KMSKS) carry the 'KMSKS' region motif. Lys580 is an ATP binding site.

Belongs to the class-I aminoacyl-tRNA synthetase family.

Its subcellular location is the cytoplasm. The catalysed reaction is tRNA(Leu) + L-leucine + ATP = L-leucyl-tRNA(Leu) + AMP + diphosphate. The chain is Leucine--tRNA ligase from Saccharophagus degradans (strain 2-40 / ATCC 43961 / DSM 17024).